A 420-amino-acid polypeptide reads, in one-letter code: 4-hydroxy-3-methylbut-2-en-1-yl diphosphate synthase (flavodoxin) (420 aa).

Residues Cys-307, Cys-310, Cys-353, and Glu-360 each coordinate [4Fe-4S] cluster.

Belongs to the IspG family. Requires [4Fe-4S] cluster as cofactor.

The catalysed reaction is (2E)-4-hydroxy-3-methylbut-2-enyl diphosphate + oxidized [flavodoxin] + H2O + 2 H(+) = 2-C-methyl-D-erythritol 2,4-cyclic diphosphate + reduced [flavodoxin]. It functions in the pathway isoprenoid biosynthesis; isopentenyl diphosphate biosynthesis via DXP pathway; isopentenyl diphosphate from 1-deoxy-D-xylulose 5-phosphate: step 5/6. Converts 2C-methyl-D-erythritol 2,4-cyclodiphosphate (ME-2,4cPP) into 1-hydroxy-2-methyl-2-(E)-butenyl 4-diphosphate. This is 4-hydroxy-3-methylbut-2-en-1-yl diphosphate synthase (flavodoxin) from Brucella suis biovar 1 (strain 1330).